A 173-amino-acid polypeptide reads, in one-letter code: Crossover junction endodeoxyribonuclease RuvC (173 aa).

Active-site residues include Asp10, Glu71, and Asp143. Residues Asp10, Glu71, and Asp143 each coordinate Mg(2+).

This sequence belongs to the RuvC family. Homodimer which binds Holliday junction (HJ) DNA. The HJ becomes 2-fold symmetrical on binding to RuvC with unstacked arms; it has a different conformation from HJ DNA in complex with RuvA. In the full resolvosome a probable DNA-RuvA(4)-RuvB(12)-RuvC(2) complex forms which resolves the HJ. Mg(2+) is required as a cofactor.

The protein localises to the cytoplasm. It carries out the reaction Endonucleolytic cleavage at a junction such as a reciprocal single-stranded crossover between two homologous DNA duplexes (Holliday junction).. In terms of biological role, the RuvA-RuvB-RuvC complex processes Holliday junction (HJ) DNA during genetic recombination and DNA repair. Endonuclease that resolves HJ intermediates. Cleaves cruciform DNA by making single-stranded nicks across the HJ at symmetrical positions within the homologous arms, yielding a 5'-phosphate and a 3'-hydroxyl group; requires a central core of homology in the junction. The consensus cleavage sequence is 5'-(A/T)TT(C/G)-3'. Cleavage occurs on the 3'-side of the TT dinucleotide at the point of strand exchange. HJ branch migration catalyzed by RuvA-RuvB allows RuvC to scan DNA until it finds its consensus sequence, where it cleaves and resolves the cruciform DNA. This Gloeobacter violaceus (strain ATCC 29082 / PCC 7421) protein is Crossover junction endodeoxyribonuclease RuvC.